The primary structure comprises 119 residues: Large ribosomal subunit protein bL20 (119 aa).

The protein belongs to the bacterial ribosomal protein bL20 family.

Its function is as follows. Binds directly to 23S ribosomal RNA and is necessary for the in vitro assembly process of the 50S ribosomal subunit. It is not involved in the protein synthesizing functions of that subunit. This is Large ribosomal subunit protein bL20 from Nitrosospira multiformis (strain ATCC 25196 / NCIMB 11849 / C 71).